Here is a 156-residue protein sequence, read N- to C-terminus: 6,7-dimethyl-8-ribityllumazine synthase (156 aa).

Residues Phe23, 57 to 59, and 81 to 83 contribute to the 5-amino-6-(D-ribitylamino)uracil site; these read AYE and AII. 86 to 87 is a (2S)-2-hydroxy-3-oxobutyl phosphate binding site; that stretch reads GT. His89 functions as the Proton donor in the catalytic mechanism. Phe114 provides a ligand contact to 5-amino-6-(D-ribitylamino)uracil. Residue Arg128 coordinates (2S)-2-hydroxy-3-oxobutyl phosphate.

Belongs to the DMRL synthase family.

It catalyses the reaction (2S)-2-hydroxy-3-oxobutyl phosphate + 5-amino-6-(D-ribitylamino)uracil = 6,7-dimethyl-8-(1-D-ribityl)lumazine + phosphate + 2 H2O + H(+). The protein operates within cofactor biosynthesis; riboflavin biosynthesis; riboflavin from 2-hydroxy-3-oxobutyl phosphate and 5-amino-6-(D-ribitylamino)uracil: step 1/2. Functionally, catalyzes the formation of 6,7-dimethyl-8-ribityllumazine by condensation of 5-amino-6-(D-ribitylamino)uracil with 3,4-dihydroxy-2-butanone 4-phosphate. This is the penultimate step in the biosynthesis of riboflavin. In Helicobacter pylori (strain J99 / ATCC 700824) (Campylobacter pylori J99), this protein is 6,7-dimethyl-8-ribityllumazine synthase.